Here is a 387-residue protein sequence, read N- to C-terminus: Putative ankyrin repeat protein RBE_0984 (387 aa).

ANK repeat units follow at residues 50–79, 88–119, 123–154, 159–188, and 210–239; these read YGNT…DKDI, HRET…AINV, RKHT…VINV, HKDS…KENI, and VCKM…LKGE. Coiled coils occupy residues 251–278 and 311–352; these read FEDI…KKCE and SISA…ALEK.

In Rickettsia bellii (strain RML369-C), this protein is Putative ankyrin repeat protein RBE_0984.